The sequence spans 190 residues: Superoxide dismutase [Cu-Zn] (190 aa).

A signal peptide spans 1–23; sequence MKLTNLALAFTLFGASAVAFAHA. The Cu cation site is built by His-83, His-85, and His-108. A disulfide bridge links Cys-90 with Cys-186. 4 residues coordinate Zn(2+): His-108, His-117, His-126, and Asp-129. Positions 162–181 are disordered; the sequence is MIHEGGDNHSDHPAPLGGGG. Cu cation is bound at residue His-164.

It belongs to the Cu-Zn superoxide dismutase family. In terms of assembly, homodimer. The cofactor is Cu cation. It depends on Zn(2+) as a cofactor.

It localises to the periplasm. The enzyme catalyses 2 superoxide + 2 H(+) = H2O2 + O2. Functionally, destroys radicals which are normally produced within the cells and which are toxic to biological systems. The polypeptide is Superoxide dismutase [Cu-Zn] (sodC) (Actinobacillus pleuropneumoniae (Haemophilus pleuropneumoniae)).